We begin with the raw amino-acid sequence, 357 residues long: Isopentenyl-diphosphate delta-isomerase (357 aa).

Position 6 to 7 (Arg-6 to Lys-7) interacts with substrate. FMN-binding positions include Ser-62, Ala-63–Thr-65, Ser-93, and Asn-122. Residue Ser-93–Arg-95 participates in substrate binding. Residue Gln-156 participates in substrate binding. Glu-157 is a Mg(2+) binding site. FMN contacts are provided by residues Lys-186, Thr-216, Gly-267–Arg-269, and Ala-288–Leu-289.

It belongs to the IPP isomerase type 2 family. Homooctamer. Dimer of tetramers. It depends on FMN as a cofactor. Requires NADPH as cofactor. Mg(2+) serves as cofactor.

The protein localises to the cytoplasm. It catalyses the reaction isopentenyl diphosphate = dimethylallyl diphosphate. In terms of biological role, involved in the biosynthesis of isoprenoids. Catalyzes the 1,3-allylic rearrangement of the homoallylic substrate isopentenyl (IPP) to its allylic isomer, dimethylallyl diphosphate (DMAPP). This chain is Isopentenyl-diphosphate delta-isomerase, found in Methanothrix thermoacetophila (strain DSM 6194 / JCM 14653 / NBRC 101360 / PT) (Methanosaeta thermophila).